Here is a 336-residue protein sequence, read N- to C-terminus: D-altritol 5-dehydrogenase (336 aa).

Residues cysteine 37, histidine 59, glutamate 60, cysteine 89, cysteine 92, cysteine 95, and cysteine 103 each contribute to the Zn(2+) site.

The protein belongs to the zinc-containing alcohol dehydrogenase family. It depends on Zn(2+) as a cofactor.

It catalyses the reaction D-altritol + NAD(+) = keto-D-tagatose + NADH + H(+). The protein operates within carbohydrate metabolism. Involved in D-altritol catabolism. Catalyzes the oxidation of D-altritol to D-tagatose. The polypeptide is D-altritol 5-dehydrogenase (Agrobacterium fabrum (strain C58 / ATCC 33970) (Agrobacterium tumefaciens (strain C58))).